The chain runs to 720 residues: Glycine--tRNA ligase beta subunit (720 aa).

This sequence belongs to the class-II aminoacyl-tRNA synthetase family. In terms of assembly, tetramer of two alpha and two beta subunits.

It localises to the cytoplasm. The catalysed reaction is tRNA(Gly) + glycine + ATP = glycyl-tRNA(Gly) + AMP + diphosphate. This chain is Glycine--tRNA ligase beta subunit, found in Dinoroseobacter shibae (strain DSM 16493 / NCIMB 14021 / DFL 12).